Here is a 147-residue protein sequence, read N- to C-terminus: Myoglobin (147 aa).

One can recognise a Globin domain in the interval 2–141 (ADFDAVLKCW…VIADLEANYK (140 aa)). His60 lines the nitrite pocket. His60 lines the O2 pocket. His89 lines the heme b pocket.

The protein belongs to the globin family. In terms of assembly, monomeric.

It localises to the cytoplasm. It is found in the sarcoplasm. The catalysed reaction is Fe(III)-heme b-[protein] + nitric oxide + H2O = Fe(II)-heme b-[protein] + nitrite + 2 H(+). It catalyses the reaction H2O2 + AH2 = A + 2 H2O. Functionally, monomeric heme protein which primary function is to store oxygen and facilitate its diffusion within muscle tissues. Reversibly binds oxygen through a pentacoordinated heme iron and enables its timely and efficient release as needed during periods of heightened demand. Depending on the oxidative conditions of tissues and cells, and in addition to its ability to bind oxygen, it also has a nitrite reductase activity whereby it regulates the production of bioactive nitric oxide. Under stress conditions, like hypoxia and anoxia, it also protects cells against reactive oxygen species thanks to its pseudoperoxidase activity. The chain is Myoglobin (mb) from Auxis rochei (Bullet tuna).